A 338-amino-acid polypeptide reads, in one-letter code: MSQDNKGNGSKKRDFLGFTGLDAAKIIELFDYSLFIKQQRETNRNSDEFRPIRHKTVAMIFNKPSLRTRVSFELGVYELGGHAISLEGKSIGVGERESIEDIARLLSRYNDAIVARLHEHEIIETLAKHADIPVINALTDLSHPCQVLADAFTLYEKGLWRDDIKVVFVGDGNNVANSWIELAGILPFHFVLACPEGYLPDETLLKQARSNAKGTIEILHDPMEAAKQADVLYTDVWTSMGQEEEMAERLKAFAPFQINAKMVAEAKPSAVIMHCMPAHRGQEISAEVMDGPQSIIIDEAENRLHVQKALMVKLMNHDVYRKFHLTHRLHRAANRLKA.

Carbamoyl phosphate contacts are provided by residues arginine 116 and 143 to 146 (HPCQ). L-ornithine contacts are provided by residues asparagine 174, aspartate 235, and 239 to 240 (SM). The carbamoyl phosphate site is built by cysteine 275 and arginine 303.

Belongs to the aspartate/ornithine carbamoyltransferase superfamily. OTCase family.

Its subcellular location is the cytoplasm. The catalysed reaction is carbamoyl phosphate + L-ornithine = L-citrulline + phosphate + H(+). The protein operates within amino-acid biosynthesis; L-arginine biosynthesis; L-arginine from L-ornithine and carbamoyl phosphate: step 1/3. Its function is as follows. Reversibly catalyzes the transfer of the carbamoyl group from carbamoyl phosphate (CP) to the N(epsilon) atom of ornithine (ORN) to produce L-citrulline. This Chlorobaculum tepidum (strain ATCC 49652 / DSM 12025 / NBRC 103806 / TLS) (Chlorobium tepidum) protein is Ornithine carbamoyltransferase.